Reading from the N-terminus, the 127-residue chain is MRKIYTIETSNFEQDQLHFSLNDNEVNLQLKPAGQLIADSDDFAFIYLLDAGEDYHYLRFPPSSWENLVHILQKKKDPILRINDEAIELINFYDELEMLVYNIEGNYNYGAEFVQTVEQHFKAILAE.

The protein belongs to the UPF0738 family.

This Lysinibacillus sphaericus (strain C3-41) protein is UPF0738 protein Bsph_1225.